Here is a 235-residue protein sequence, read N- to C-terminus: Small ribosomal subunit protein eS4 (235 aa).

The S4 RNA-binding domain maps to 37 to 100; that stretch reads LPLGIIIRDI…NETYRMFQDE (64 aa).

It belongs to the eukaryotic ribosomal protein eS4 family.

This is Small ribosomal subunit protein eS4 from Methanosarcina barkeri (strain Fusaro / DSM 804).